Consider the following 161-residue polypeptide: Regulator of ribonuclease activity A (161 aa).

It belongs to the RraA family. In terms of assembly, homotrimer. Binds to both RNA-binding sites in the C-terminal region of Rne and to RhlB.

The protein resides in the cytoplasm. In terms of biological role, globally modulates RNA abundance by binding to RNase E (Rne) and regulating its endonucleolytic activity. Can modulate Rne action in a substrate-dependent manner by altering the composition of the degradosome. Modulates RNA-binding and helicase activities of the degradosome. In Escherichia fergusonii (strain ATCC 35469 / DSM 13698 / CCUG 18766 / IAM 14443 / JCM 21226 / LMG 7866 / NBRC 102419 / NCTC 12128 / CDC 0568-73), this protein is Regulator of ribonuclease activity A.